We begin with the raw amino-acid sequence, 299 residues long: ATP phosphoribosyltransferase (299 aa).

It belongs to the ATP phosphoribosyltransferase family. Long subfamily. In terms of assembly, equilibrium between an active dimeric form, an inactive hexameric form and higher aggregates. Interconversion between the various forms is largely reversible and is influenced by the natural substrates and inhibitors of the enzyme. The cofactor is Mg(2+).

It is found in the cytoplasm. It carries out the reaction 1-(5-phospho-beta-D-ribosyl)-ATP + diphosphate = 5-phospho-alpha-D-ribose 1-diphosphate + ATP. The protein operates within amino-acid biosynthesis; L-histidine biosynthesis; L-histidine from 5-phospho-alpha-D-ribose 1-diphosphate: step 1/9. Feedback inhibited by histidine. In terms of biological role, catalyzes the condensation of ATP and 5-phosphoribose 1-diphosphate to form N'-(5'-phosphoribosyl)-ATP (PR-ATP). Has a crucial role in the pathway because the rate of histidine biosynthesis seems to be controlled primarily by regulation of HisG enzymatic activity. The polypeptide is ATP phosphoribosyltransferase (hisG) (Buchnera aphidicola subsp. Schizaphis graminum (strain Sg)).